Reading from the N-terminus, the 295-residue chain is tRNA dimethylallyltransferase (295 aa).

9–16 (GATATGKS) serves as a coordination point for ATP. A substrate-binding site is contributed by 11 to 16 (TATGKS). Positions 34 to 37 (DSRQ) are interaction with substrate tRNA.

This sequence belongs to the IPP transferase family. As to quaternary structure, monomer. Mg(2+) is required as a cofactor.

It carries out the reaction adenosine(37) in tRNA + dimethylallyl diphosphate = N(6)-dimethylallyladenosine(37) in tRNA + diphosphate. Catalyzes the transfer of a dimethylallyl group onto the adenine at position 37 in tRNAs that read codons beginning with uridine, leading to the formation of N6-(dimethylallyl)adenosine (i(6)A). This chain is tRNA dimethylallyltransferase, found in Nostoc sp. (strain PCC 7120 / SAG 25.82 / UTEX 2576).